Consider the following 147-residue polypeptide: Ubiquitin-conjugating enzyme E2-16 kDa (147 aa).

Residues 1-147 (MAFKRINKEL…AREWTRKYAI (147 aa)) enclose the UBC core domain. Residue cysteine 107 is the Glycyl thioester intermediate of the active site.

It belongs to the ubiquitin-conjugating enzyme family.

It catalyses the reaction S-ubiquitinyl-[E1 ubiquitin-activating enzyme]-L-cysteine + [E2 ubiquitin-conjugating enzyme]-L-cysteine = [E1 ubiquitin-activating enzyme]-L-cysteine + S-ubiquitinyl-[E2 ubiquitin-conjugating enzyme]-L-cysteine.. It participates in protein modification; protein ubiquitination. Catalyzes the covalent attachment of ubiquitin to other proteins. May also mediate selective proteolysis pathways. This chain is Ubiquitin-conjugating enzyme E2-16 kDa (UBC1), found in Colletotrichum gloeosporioides (Anthracnose fungus).